The following is a 236-amino-acid chain: UPF0502 protein BceJ2315_62050 (236 aa).

Belongs to the UPF0502 family.

This is UPF0502 protein BceJ2315_62050 from Burkholderia cenocepacia (strain ATCC BAA-245 / DSM 16553 / LMG 16656 / NCTC 13227 / J2315 / CF5610) (Burkholderia cepacia (strain J2315)).